The following is a 318-amino-acid chain: 3'-5' exoribonuclease YhaM (318 aa).

The HD domain occupies 163 to 279 (HVVSMLDLAK…LHYIDNLDAK (117 aa)).

Belongs to the YhaM family.

Shows a 3'-5' exoribonuclease activity. In Bacillus cytotoxicus (strain DSM 22905 / CIP 110041 / 391-98 / NVH 391-98), this protein is 3'-5' exoribonuclease YhaM.